We begin with the raw amino-acid sequence, 95 residues long: Small ribosomal subunit protein uS15 (95 aa).

The protein belongs to the universal ribosomal protein uS15 family. As to quaternary structure, part of the 30S ribosomal subunit. Forms a bridge to the 50S subunit in the 70S ribosome, contacting the 23S rRNA.

Functionally, one of the primary rRNA binding proteins, it binds directly to 16S rRNA where it helps nucleate assembly of the platform of the 30S subunit by binding and bridging several RNA helices of the 16S rRNA. Forms an intersubunit bridge (bridge B4) with the 23S rRNA of the 50S subunit in the ribosome. The protein is Small ribosomal subunit protein uS15 of Streptomyces avermitilis (strain ATCC 31267 / DSM 46492 / JCM 5070 / NBRC 14893 / NCIMB 12804 / NRRL 8165 / MA-4680).